Reading from the N-terminus, the 251-residue chain is 1-(5-phosphoribosyl)-5-[(5-phosphoribosylamino)methylideneamino] imidazole-4-carboxamide isomerase (251 aa).

Residue Asp-7 is the Proton acceptor of the active site. Asp-131 (proton donor) is an active-site residue.

Belongs to the HisA/HisF family.

The protein resides in the cytoplasm. It catalyses the reaction 1-(5-phospho-beta-D-ribosyl)-5-[(5-phospho-beta-D-ribosylamino)methylideneamino]imidazole-4-carboxamide = 5-[(5-phospho-1-deoxy-D-ribulos-1-ylimino)methylamino]-1-(5-phospho-beta-D-ribosyl)imidazole-4-carboxamide. It functions in the pathway amino-acid biosynthesis; L-histidine biosynthesis; L-histidine from 5-phospho-alpha-D-ribose 1-diphosphate: step 4/9. This is 1-(5-phosphoribosyl)-5-[(5-phosphoribosylamino)methylideneamino] imidazole-4-carboxamide isomerase from Blochmanniella floridana.